The sequence spans 92 residues: Sec-independent protein translocase protein TatA (92 aa).

A helical transmembrane segment spans residues 2–22 (IPANFGGTELIILLVIILLLF). Positions 43 to 92 (KGTSGAYEELEEKKGEEEKDEGGKKEAEASGRGEEEQQARAAGEAGRKQG) are disordered. Residues 53-80 (EEKKGEEEKDEGGKKEAEASGRGEEEQQ) show a composition bias toward basic and acidic residues.

The protein belongs to the TatA/E family. As to quaternary structure, the Tat system comprises two distinct complexes: a TatABC complex, containing multiple copies of TatA, TatB and TatC subunits, and a separate TatA complex, containing only TatA subunits. Substrates initially bind to the TatABC complex, which probably triggers association of the separate TatA complex to form the active translocon.

The protein localises to the cell membrane. Its function is as follows. Part of the twin-arginine translocation (Tat) system that transports large folded proteins containing a characteristic twin-arginine motif in their signal peptide across membranes. TatA could form the protein-conducting channel of the Tat system. The sequence is that of Sec-independent protein translocase protein TatA from Rubrobacter xylanophilus (strain DSM 9941 / JCM 11954 / NBRC 16129 / PRD-1).